The chain runs to 1067 residues: Protein CLEC16A homolog (1067 aa).

An FPL domain is found at leucine 50 to tyrosine 199. A helical membrane pass occupies residues serine 333–valine 353. Residues serine 409–aspartate 418 show a composition bias toward low complexity. 4 disordered regions span residues serine 409–glutamine 434, alanine 837–serine 861, serine 876–histidine 993, and glutamine 1037–valine 1067. Residues valine 421–aspartate 432 show a composition bias toward polar residues. Polar residues predominate over residues serine 876–proline 888. Residues arginine 917–serine 926 are compositionally biased toward basic and acidic residues. The segment covering proline 927–serine 947 has biased composition (low complexity). Over residues arginine 951–histidine 974 the composition is skewed to basic and acidic residues. A compositionally biased stretch (polar residues) spans serine 975 to histidine 993. Over residues glutamate 1057–valine 1067 the composition is skewed to basic and acidic residues.

This sequence belongs to the CLEC16A/gop-1 family. Interacts with the class C Vps-HOPS complex components; Car, Dor and Vps16a.

It is found in the cytoplasmic vesicle. The protein localises to the autophagosome membrane. It localises to the late endosome membrane. Its subcellular location is the golgi apparatus membrane. In terms of biological role, required for mitophagy, autophagy and endosome maturation, possibly by acting in multiple membrane trafficking pathways. Required for endosome trafficking and maturation. Functions with the class C Vps-HOPS complex member Vps16a to promote endosomal maturation into degradative late endosomes and lysosomes. In response to starvation, functions at an early stage of autophagy to promote autophagosome growth and efficient autophagy. Essential for the recruitment of lva-positive Golgi elements to autophagosomes. Likely to function by promoting membrane traffic from the Golgi complex to the developing autophagosomes. Also regulates synaptic growth at the neuromuscular junctions (NMJ) by down-regulating BMP signaling. This chain is Protein CLEC16A homolog, found in Drosophila melanogaster (Fruit fly).